The primary structure comprises 1088 residues: Calcium-transporting ATPase 5, plasma membrane-type (1088 aa).

Positions 1–11 are enriched in low complexity; the sequence is MESASSSLATS. Residues 1-32 form a disordered region; the sequence is MESASSSLATSGRRRSSSGGGGGSWGSIGSAA. Over 1 to 198 the chain is Cytoplasmic; it reads MESASSSLAT…FLWDACKDLT (198 aa). Residues 199-219 form a helical membrane-spanning segment; it reads LIILMVAAAVSLALGITTEGI. Topologically, residues 220–221 are extracellular; the sequence is KE. A helical transmembrane segment spans residues 222-242; that stretch reads GWYDGASIAFAVLLVVVVTAT. Residues 243–338 lie on the Cytoplasmic side of the membrane; sequence SDYKQSLQFQ…MSGCKVADGY (96 aa). Residues 339–359 form a helical membrane-spanning segment; that stretch reads GTMLVTAVGINTEWGLLMASI. Over 360–375 the chain is Extracellular; sequence SEDSGEETPLQVRLNG. The helical transmembrane segment at 376–396 threads the bilayer; the sequence is VATFIGMVGLSVALAVLVVLL. The Cytoplasmic portion of the chain corresponds to 397–425; the sequence is ARYFTGHTYNPDGSVQYVKGKMGVGQTIR. A helical membrane pass occupies residues 426-446; the sequence is GIVGIFTVAVTIVVVAVPEGL. At 447–851 the chain is on the extracellular side; the sequence is PLAVTLTLAF…GRSVYANIQK (405 aa). The 4-aspartylphosphate intermediate role is filled by D486. N532, N569, and N737 each carry an N-linked (GlcNAc...) asparagine glycan. Positions 794 and 798 each coordinate Mg(2+). A helical transmembrane segment spans residues 852 to 872; sequence FIQFQLTVNVAALIINVVAAV. The Cytoplasmic portion of the chain corresponds to 873 to 880; it reads SSGNVPLN. The helical transmembrane segment at 881-901 threads the bilayer; sequence AVQLLWVNLIMDTLGALALAT. Over 902–919 the chain is Extracellular; sequence EPPTDHLMQRPPVGRREP. The chain crosses the membrane as a helical span at residues 920–940; it reads LITNVMWRNLIIMALFQVIVL. The Cytoplasmic segment spans residues 941–1000; the sequence is LTLNFRGTSLLQLKNDNQAHADKVKNTFIFNTFVLCQVFNEFNARKPDELNIFKGITGNH. A helical membrane pass occupies residues 1001–1021; it reads LFMAIVAITVVLQALIVEFLG. Residues 1022–1030 are Extracellular-facing; it reads KFTSTTRLT. The helical transmembrane segment at 1031–1051 threads the bilayer; the sequence is WQLWLVSIGLAFFSWPLAFVG. Residues 1052–1088 are Cytoplasmic-facing; it reads KLIPVPERPLGDFFACCCPGSKQAADAKGDDADHSDV.

The protein belongs to the cation transport ATPase (P-type) (TC 3.A.3) family. Type IIB subfamily. As to quaternary structure, interacts with NOH1.

The protein localises to the cell membrane. The enzyme catalyses Ca(2+)(in) + ATP + H2O = Ca(2+)(out) + ADP + phosphate + H(+). Its activity is regulated as follows. Activated by calmodulin. Functionally, this magnesium-dependent enzyme catalyzes the hydrolysis of ATP coupled with the translocation of calcium from the cytosol out of the cell, into the endoplasmic reticulum, or into organelles. Involved in salt and drought stress tolerance. Involved in cold stress tolerance. The sequence is that of Calcium-transporting ATPase 5, plasma membrane-type from Oryza sativa subsp. japonica (Rice).